A 266-amino-acid chain; its full sequence is MATKILALLALLALFVSATNAFIIPQCSLAPSAIIPQFLRPVTSMGFEHLAVQAYRLQQALAASVLQQPINQLQQQSLAHLTIQTIATQQQQQFLPALSQLDVVNPVAYLQQQVLASNPLALANVAAYQQQQQLQQFLPALSQLAMVNPAAYLQQQQLLSSSPLVVGNAPTYLQQQLLQQIVPALTQLAVANPAAYLQQLLPFNQLTVSNSAAYLQQRQQLLNPLAVPNPLVTAFLQQQQLLPYSQFSLMNPALSWQQPIVGGAIF.

An N-terminal signal peptide occupies residues 1–21; the sequence is MATKILALLALLALFVSATNA.

It belongs to the zein family.

In terms of biological role, zeins are major seed storage proteins. This Zea mays (Maize) protein is 22 kDa alpha-zein 8.